A 405-amino-acid chain; its full sequence is Transcriptional regulatory protein DEP1 (405 aa).

Over residues Met-1–Thr-12 the composition is skewed to low complexity. Disordered regions lie at residues Met-1–Ser-26 and Ala-49–Ser-171. At Ser-56 the chain carries Phosphoserine. 2 stretches are compositionally biased toward basic and acidic residues: residues Ser-86 to Gly-108 and Glu-116 to Glu-139. Position 120 is a phosphoserine (Ser-120). The segment covering Gln-140 to Asn-157 has biased composition (acidic residues). Phosphoserine is present on Ser-370.

In terms of assembly, component of the RPD3C(L) complex composed of at least ASH1, CTI6, DEP1, PHO23, RPD3, RXT2, RXT3, SAP30, SDS3, SIN3, UME1 and UME6.

It is found in the cytoplasm. The protein resides in the nucleus. In terms of biological role, component of the RPD3C(L) histone deacetylase complex (HDAC) responsible for the deacetylation of lysine residues on the N-terminal part of the core histones (H2A, H2B, H3 and H4). Histone deacetylation gives a tag for epigenetic repression and plays an important role in transcriptional regulation, cell cycle progression and developmental events. The polypeptide is Transcriptional regulatory protein DEP1 (DEP1) (Saccharomyces cerevisiae (strain ATCC 204508 / S288c) (Baker's yeast)).